We begin with the raw amino-acid sequence, 423 residues long: Glutamate-1-semialdehyde 2,1-aminomutase (423 aa).

At lysine 263 the chain carries N6-(pyridoxal phosphate)lysine.

The protein belongs to the class-III pyridoxal-phosphate-dependent aminotransferase family. HemL subfamily. Pyridoxal 5'-phosphate serves as cofactor.

It is found in the cytoplasm. The catalysed reaction is (S)-4-amino-5-oxopentanoate = 5-aminolevulinate. It functions in the pathway porphyrin-containing compound metabolism; protoporphyrin-IX biosynthesis; 5-aminolevulinate from L-glutamyl-tRNA(Glu): step 2/2. This Ignicoccus hospitalis (strain KIN4/I / DSM 18386 / JCM 14125) protein is Glutamate-1-semialdehyde 2,1-aminomutase.